A 234-amino-acid polypeptide reads, in one-letter code: Nuclear transcription factor Y subunit C-1 (234 aa).

2 disordered regions span residues 1–20 and 205–234; these read MDTN…PPPP and SVWQ…DGQG. Pro residues predominate over residues 7 to 20; it reads QPPPSAAGIPPPPP. The segment covering 209 to 219 has biased composition (low complexity); the sequence is TSTGTGDDVSY. Positions 220–234 are enriched in gly residues; the sequence is GSGGSSGQGNLDGQG.

It belongs to the NFYC/HAP5 subunit family. Heterotrimeric transcription factor composed of three components, NF-YA, NF-YB and NF-YC. NF-YB and NF-YC must interact and dimerize for NF-YA association and DNA binding. Ubiquitous. Present in etiolated seedlings.

It localises to the nucleus. Functionally, stimulates the transcription of various genes by recognizing and binding to a CCAAT motif in promoters. The chain is Nuclear transcription factor Y subunit C-1 (NFYC1) from Arabidopsis thaliana (Mouse-ear cress).